The primary structure comprises 89 residues: Large ribosomal subunit protein bL27 (89 aa).

The tract at residues 1-21 (MAHKKAGGSSRNGRDSQSKRL) is disordered.

This sequence belongs to the bacterial ribosomal protein bL27 family.

The polypeptide is Large ribosomal subunit protein bL27 (Rhizobium leguminosarum bv. trifolii (strain WSM2304)).